Reading from the N-terminus, the 1063-residue chain is Structural polyprotein (1063 aa).

A disordered region spans residues methionine 1–alanine 131. Positions glycine 30–glycine 69 are human C1QBP/SF2P32-binding. A Phosphoserine; by host modification is found at serine 46. Basic and acidic residues predominate over residues glutamine 70–serine 87. The span at alanine 93–proline 107 shows a compositional bias: pro residues. Cysteine 153 and cysteine 197 are oxidised to a cystine. Residues glycine 279–alanine 300 form a functions as E2 signal peptide region. The Extracellular portion of the chain corresponds to glycine 301 to serine 534. N-linked (GlcNAc...) asparagine; by host glycosylation is found at asparagine 353, asparagine 371, asparagine 410, and asparagine 429. A helical membrane pass occupies residues leucine 535–cysteine 555. The Cytoplasmic segment spans residues arginine 556 to glycine 582. A functions as E1 signal peptide region spans residues glycine 563 to glycine 582. The Extracellular portion of the chain corresponds to glutamate 583–histidine 1028. 8 cysteine pairs are disulfide-bonded: cysteine 590/cysteine 595, cysteine 619/cysteine 824, cysteine 641/cysteine 653, cysteine 699/cysteine 712, cysteine 758/cysteine 767, cysteine 807/cysteine 817, cysteine 931/cysteine 934, and cysteine 950/cysteine 983. The N-linked (GlcNAc...) asparagine; by host glycan is linked to asparagine 658. Positions 670 and 671 each coordinate Ca(2+). Positions 718 and 719 each coordinate Ca(2+). Residues asparagine 759 and asparagine 791 are each glycosylated (N-linked (GlcNAc...) asparagine; by host). O-linked (GalNAc...) threonine; by host glycans are attached at residues threonine 1011 and threonine 1012. The chain crosses the membrane as a helical span at residues tryptophan 1029–cysteine 1049. At alanine 1050–arginine 1063 the chain is on the extracellular side.

In terms of assembly, homodimer; further assembles into homooligomer. Interacts with human C1QBP. Interacts (via N-terminus) with protease/methyltransferase p150. As to quaternary structure, heterodimer with spike glycoprotein E2. Heterodimer with spike glycoprotein E1. Structural polyprotein: Specific enzymatic cleavages in vivo yield mature proteins. Two signal peptidase-mediated cleavages within the polyprotein produce the structural proteins capsid, E2, and E1. The E2 signal peptide remains attached to the C-terminus of the capsid protein after cleavage by the signal peptidase. Another signal peptide at E2 C-terminus directs E1 to the ER, with a similar mechanism. Post-translationally, contains three N-linked oligosaccharides. In terms of processing, capsid is phosphorylated on Ser-46 by host. This phosphorylation negatively regulates capsid protein RNA-binding activity. Dephosphorylated by human PP1A.

It is found in the virion. Its subcellular location is the host cytoplasm. It localises to the host mitochondrion. The protein localises to the virion membrane. The protein resides in the host Golgi apparatus membrane. In terms of biological role, capsid protein interacts with genomic RNA and assembles into icosahedric core particles 65-70 nm in diameter. The resulting nucleocapsid eventually associates with the cytoplasmic domain of E2 at the cell membrane, leading to budding and formation of mature virions from host Golgi membranes. Phosphorylation negatively regulates RNA-binding activity, possibly delaying virion assembly during the viral replication phase. Capsid protein dimerizes and becomes disulfide-linked in the virion. Modulates genomic RNA replication. Modulates subgenomic RNA synthesis by interacting with human C1QBP/SF2P32. Induces both perinuclear clustering of mitochondria and the formation of electron-dense intermitochondrial plaques, both hallmarks of rubella virus infected cells. Induces apoptosis when expressed in transfected cells. Functionally, responsible for viral attachment to target host cell, by binding to the cell receptor. Its transport to the plasma membrane depends on interaction with E1 protein. The surface glycoproteins display an irregular helical organization and a pseudo-tetrameric inner nucleocapsid arrangement. Its function is as follows. Class II viral fusion protein. Fusion activity is inactive as long as E1 is bound to E2 in mature virion. After virus attachment to target cell and clathrin-mediated endocytosis, acidification of the endosome would induce dissociation of E1/E2 heterodimer and concomitant trimerization of the E1 subunits. This E1 homotrimer is fusion active, and promotes release of viral nucleocapsid in cytoplasm after endosome and viral membrane fusion. The cytoplasmic tail of spike glycoprotein E1 modulates virus release. The surface glycoproteins display an irregular helical organization and a pseudo-tetrameric inner nucleocapsid arrangement. The chain is Structural polyprotein from Rubella virus (strain TO-336 vaccine) (RUBV).